Here is a 94-residue protein sequence, read N- to C-terminus: Co-chaperonin GroES (94 aa).

Belongs to the GroES chaperonin family. In terms of assembly, heptamer of 7 subunits arranged in a ring. Interacts with the chaperonin GroEL.

It is found in the cytoplasm. Its function is as follows. Together with the chaperonin GroEL, plays an essential role in assisting protein folding. The GroEL-GroES system forms a nano-cage that allows encapsulation of the non-native substrate proteins and provides a physical environment optimized to promote and accelerate protein folding. GroES binds to the apical surface of the GroEL ring, thereby capping the opening of the GroEL channel. In Listeria welshimeri serovar 6b (strain ATCC 35897 / DSM 20650 / CCUG 15529 / CIP 8149 / NCTC 11857 / SLCC 5334 / V8), this protein is Co-chaperonin GroES.